The following is a 150-amino-acid chain: Transcriptional repressor NrdR (150 aa).

Residues 3–34 (CPFCAFADSKVVDSRPDKEGSTIRRRRECESC) fold into a zinc finger. The 91-residue stretch at 49–139 (PLVIKKDGRR…VYRSFKDITE (91 aa)) folds into the ATP-cone domain.

This sequence belongs to the NrdR family. Zn(2+) is required as a cofactor.

Functionally, negatively regulates transcription of bacterial ribonucleotide reductase nrd genes and operons by binding to NrdR-boxes. The polypeptide is Transcriptional repressor NrdR (Geotalea daltonii (strain DSM 22248 / JCM 15807 / FRC-32) (Geobacter daltonii)).